The following is a 185-amino-acid chain: Bcl-2-like protein 10 (185 aa).

Residues 76-95 (LSNDQEFNWGRLVMLLAFVG) carry the BH1 motif. A BH2 motif is present at residues 138 to 149 (WLEAHGGWDGFC). The helical transmembrane segment at 160 to 182 (FWRRLLIRAILSCFFATAIFYIW) threads the bilayer.

Belongs to the Bcl-2 family. Interacts with BAX. Interacts with BCL2, BCL2L1/BCLX. Interacts with APAF1. Interacts with ITPR1, ITPR2 and ITPR3; the interaction with ITPR1 is increased in the presence of AHCLY1. Interacts with AHCYL1. Interacts with HIP1R (via ENTH and I/LWEQ domains). Interacts with CASP9. Interacts with BCL2L11/BIM. Interacts with BIK. Interacts with UBQLN4. Interacts with NME2/NM23-H2. Interacts with and PMAIP1/NOXA. Interacts with TPX2. Interacts with UBQLN1; in the cytoplasm. Interacts (via BH1 domain) with BECN1. Ca(2+) is required as a cofactor. In terms of processing, monoubiquitinated by UBQLN1; results in stabilization of BCL2L10 protein abundance and in relocalization from mitochondria to cytoplasm. Expressed in oligodendroglial lineage cells.

Its subcellular location is the mitochondrion. The protein localises to the nucleus membrane. The protein resides in the endoplasmic reticulum. It is found in the cytoplasm. It localises to the cytoskeleton. Its subcellular location is the spindle. Functionally, promotes cell survival by suppressing apoptosis induced by BAX but not BAK. Increases binding of AHCYL1/IRBIT to ITPR1. Reduces ITPR1-mediated calcium release from the endoplasmic reticulum cooperatively with AHCYL1/IRBIT under normal cellular conditions. Under apoptotic stress conditions, dissociates from ITPR1 and is displaced from mitochondria-associated endoplasmic reticulum membranes, leading to increased Ca(2+) transfer to mitochondria which promotes apoptosis. Required for the correct formation of the microtubule organizing center during oocyte cell division, potentially via regulation of protein abundance and localization of other microtubule organizing center components such as AURKA and TPX2. The chain is Bcl-2-like protein 10 from Rattus norvegicus (Rat).